Here is a 395-residue protein sequence, read N- to C-terminus: uncharacterized protein (395 aa).

The stretch at 288–318 forms a coiled coil; that stretch reads VAKGKEIDNAEIEKTIKEYENIEEGIEDIVK.

This is an uncharacterized protein from Ostreid herpesvirus 1 (isolate France) (OsHV-1).